We begin with the raw amino-acid sequence, 852 residues long: Glutamine--tRNA ligase (852 aa).

The disordered stretch occupies residues 1 to 42; sequence MGAFGWEQDRGAPFSGRSPRILTRMTDAPRPTAGADAPARPP. A glutaminyl-tRNA synthetase region spans residues 1 to 635; sequence MGAFGWEQDR…ITLKDTWGKQ (635 aa). Low complexity predominate over residues 28 to 38; sequence APRPTAGADAP. The short motif at 74–84 is the 'HIGH' region element; the sequence is PDPSGYAHLGH. D107 and Y252 together coordinate L-glutamine. The 'KMSKS' region signature appears at 308 to 312; it reads ITSKR. Disordered regions lie at residues 533–562 and 632–681; these read EGENADVEDDSAGPAEHEAEPGAGQETAPV and WGKQ…LTPE. The segment at 636-852 is gatB-like; sequence GGGTQQKAEG…LAAALKDALA (217 aa). Low complexity predominate over residues 664–675; it reads SSSPAKAHAPKA.

It in the N-terminal section; belongs to the class-I aminoacyl-tRNA synthetase family. This sequence in the C-terminal section; belongs to the GatB/GatE family. As to quaternary structure, monomer.

It is found in the cytoplasm. The enzyme catalyses tRNA(Gln) + L-glutamine + ATP = L-glutaminyl-tRNA(Gln) + AMP + diphosphate. This Deinococcus radiodurans (strain ATCC 13939 / DSM 20539 / JCM 16871 / CCUG 27074 / LMG 4051 / NBRC 15346 / NCIMB 9279 / VKM B-1422 / R1) protein is Glutamine--tRNA ligase.